Consider the following 297-residue polypeptide: Tumor necrosis factor receptor superfamily member 27 (297 aa).

Over 1–138 the chain is Extracellular; the sequence is MDCQENEYWD…TPTVPPQEAT (138 aa). TNFR-Cys repeat units follow at residues 2 to 41, 43 to 83, and 85 to 118; these read DCQENEYWDQWGRCVTCQRCGPGQELSKDCGYGEGGDAYC, ACPP…NAVC, and DCLPRFYRKTRIGGLQDQECIPCTKQTPTSEVQC. Intrachain disulfides connect C3/C15, C18/C31, C21/C41, C44/C58, C61/C75, C64/C83, C86/C104, and C107/C118. N74 is a glycosylation site (N-linked (GlcNAc...) asparagine). Residues 139–159 traverse the membrane as a helical; Signal-anchor for type III membrane protein segment; it reads LVALVSSLLVVFTLAFLGLFF. The Cytoplasmic segment spans residues 160-297; that stretch reads LYCKQFFNRH…LNVPFEVPSP (138 aa). The segment covering 272 to 281 has biased composition (polar residues); sequence ETLGGNTVES. The segment at 272–297 is disordered; it reads ETLGGNTVESTGDRLELNVPFEVPSP.

In terms of assembly, associates with TRAF1, TRAF3 and TRAF6.

It is found in the membrane. Functionally, receptor for EDA isoform A2, but not for EDA isoform A1. Mediates the activation of the NF-kappa-B and JNK pathways. Activation seems to be mediated by binding to TRAF3 and TRAF6. The protein is Tumor necrosis factor receptor superfamily member 27 (EDA2R) of Homo sapiens (Human).